The primary structure comprises 106 residues: UPF0145 protein Athe_0545 (106 aa).

This sequence belongs to the UPF0145 family.

The protein is UPF0145 protein Athe_0545 of Caldicellulosiruptor bescii (strain ATCC BAA-1888 / DSM 6725 / KCTC 15123 / Z-1320) (Anaerocellum thermophilum).